Reading from the N-terminus, the 953-residue chain is Ubiquitin carboxyl-terminal hydrolase CYLD (953 aa).

The interaction with TRIP stretch occupies residues 106–590 (CEERFSLFKN…FEIMIGKKKG (485 aa)). 2 consecutive CAP-Gly domains span residues 153-198 (LAER…VFVA) and 253-286 (DVLP…VQLC). 2 disordered regions span residues 313 to 349 (PPKL…RNRS) and 384 to 410 (SLTE…LSSE). The segment covering 337 to 346 (TGSTSDPGTR) has biased composition (polar residues). Residues S384, S415, and S419 each carry the phosphoserine modification. An interaction with TRAF2 region spans residues 391–466 (DFGHASPPLQ…LAVSSGNSHG (76 aa)). Residues 467–681 (LEVGSLAEVK…FTSEEKDPEE (215 aa)) form an interaction with IKBKG/NEMO region. Residues 489-532 (GQPPGLNEVLAGLELEDECAGCTDGTFRGTRYFTCALKKALFVK) enclose the CAP-Gly 3 domain. The 359-residue stretch at 589–947 (KGIQGHYNSC…DAYMCMYQSP (359 aa)) folds into the USP domain. C598 acts as the Nucleophile in catalysis. The B-box stretch occupies residues 778–830 (LEDTPRQCRICGGLAMYECRECYDDPDISAGKIKQFCKTCNAQVHLHPKRLNH). Zn(2+)-binding residues include C785, C788, C796, C799, C814, C817, H822, and H830. H868 (proton acceptor) is an active-site residue.

It belongs to the peptidase C19 family. In terms of assembly, interacts (via CAP-Gly domain) with IKBKG/NEMO (via proline-rich C-terminal region). Interacts with TRAF2 and TRIP. Interacts with PLK1, DVL1, DVL3, MAVS, TBK1, IKKE and RIGI. Interacts (via CAP-Gly domain) with microtubules. Interacts with HDAC6 and BCL3. Interacts with MAP3K7. Identified in a complex with TRAF6 and SQSTM1. Interacts with OPTN and SQSTM1. Interacts with CEP350. Interacts with RNF31; the interaction is indirect and is mediated via SPATA2. Interacts with SPATA2 (via the PUB domain); the interaction is direct and recruits CYLD to the LUBAC complex, thereby regulating TNF-alpha-induced necroptosis. In terms of processing, phosphorylated on several serine residues by IKKA and/or IKKB in response to immune stimuli. Phosphorylation requires IKBKG. Phosphorylation abolishes TRAF2 deubiquitination, interferes with the activation of Jun kinases, and strongly reduces CD40-dependent gene activation by NF-kappa-B. Post-translationally, ubiquitinated. Polyubiquitinated in hepatocytes treated with palmitic acid. Ubiquitination is mediated by E3 ligase TRIM47 and leads to proteasomal degradation.

The protein localises to the cytoplasm. It is found in the perinuclear region. Its subcellular location is the cytoskeleton. The protein resides in the cell membrane. It localises to the microtubule organizing center. The protein localises to the centrosome. It is found in the spindle. Its subcellular location is the cilium basal body. The enzyme catalyses Thiol-dependent hydrolysis of ester, thioester, amide, peptide and isopeptide bonds formed by the C-terminal Gly of ubiquitin (a 76-residue protein attached to proteins as an intracellular targeting signal).. Deubiquitinase that specifically cleaves 'Lys-63'- and linear 'Met-1'-linked polyubiquitin chains and is involved in NF-kappa-B activation and TNF-alpha-induced necroptosis. Negatively regulates NF-kappa-B activation by deubiquitinating upstream signaling factors. Contributes to the regulation of cell survival, proliferation and differentiation via its effects on NF-kappa-B activation. Negative regulator of Wnt signaling. Inhibits HDAC6 and thereby promotes acetylation of alpha-tubulin and stabilization of microtubules. Plays a role in the regulation of microtubule dynamics, and thereby contributes to the regulation of cell proliferation, cell polarization, cell migration, and angiogenesis. Required for normal cell cycle progress and normal cytokinesis. Inhibits nuclear translocation of NF-kappa-B. Plays a role in the regulation of inflammation and the innate immune response, via its effects on NF-kappa-B activation. Dispensable for the maturation of intrathymic natural killer cells, but required for the continued survival of immature natural killer cells. Negatively regulates TNFRSF11A signaling and osteoclastogenesis. Involved in the regulation of ciliogenesis, allowing ciliary basal bodies to migrate and dock to the plasma membrane; this process does not depend on NF-kappa-B activation. Ability to remove linear ('Met-1'-linked) polyubiquitin chains regulates innate immunity and TNF-alpha-induced necroptosis: recruited to the LUBAC complex via interaction with SPATA2 and restricts linear polyubiquitin formation on target proteins. Regulates innate immunity by restricting linear polyubiquitin formation on RIPK2 in response to NOD2 stimulation. Involved in TNF-alpha-induced necroptosis by removing linear ('Met-1'-linked) polyubiquitin chains from RIPK1, thereby regulating the kinase activity of RIPK1. Negatively regulates intestinal inflammation by removing 'Lys-63' linked polyubiquitin chain of NLRP6, thereby reducing the interaction between NLRP6 and PYCARD/ASC and formation of the NLRP6 inflammasome. Does not catalyze deubiquitination of heterotypic 'Lys-63'-/'Lys-48'-linked branched ubiquitin chains. Removes 'Lys-63' linked polyubiquitin chain of MAP3K7, which inhibits phosphorylation and blocks downstream activation of the JNK-p38 kinase cascades. Also removes 'Lys-63'-linked polyubiquitin chains of MAP3K1 and MA3P3K3, which inhibit their interaction with MAP2K1 and MAP2K2. This Bos taurus (Bovine) protein is Ubiquitin carboxyl-terminal hydrolase CYLD (CYLD).